The primary structure comprises 449 residues: Heterogeneous nuclear ribonucleoprotein H2 (449 aa).

At methionine 1 the chain carries N-acetylmethionine. The residue at position 2 (methionine 2) is an N-acetylmethionine; in Heterogeneous nuclear ribonucleoprotein H2, N-terminally processed. An RRM 1 domain is found at 11–90 (FVVKVRGLPW…RYVEVFKSNS (80 aa)). Serine 23 is modified (phosphoserine). Lysine 35 is covalently cross-linked (Glycyl lysine isopeptide (Lys-Gly) (interchain with G-Cter in SUMO2)). Serine 54 and serine 63 each carry phosphoserine. Residue lysine 87 forms a Glycyl lysine isopeptide (Lys-Gly) (interchain with G-Cter in SUMO2) linkage. At serine 90 the chain carries Phosphoserine. Lysine 98 participates in a covalent cross-link: Glycyl lysine isopeptide (Lys-Gly) (interchain with G-Cter in SUMO2). The RRM 2 domain maps to 111–188 (GFVRLRGLPF…RYIEIFKSSR (78 aa)). Arginine 233 bears the Dimethylated arginine; alternate mark. Arginine 233 is subject to Omega-N-methylarginine; alternate. The 1-1 repeat unit spans residues 234-249 (GAYGGGYGGYDDYGGY). The tract at residues 234 to 433 (GAYGGGYGGY…YGGQSSMSGY (200 aa)) is 2 X 16 AA Gly-rich approximate repeats. Tyrosine 246 is modified (phosphotyrosine). Residues 289 to 364 (HCVHMRGLPY…RYVELFLNST (76 aa)) enclose the RRM 3 domain. Position 310 is a phosphoserine (serine 310). 3 consecutive repeat copies span residues 354–372 (HRYV…GGAY), 374–392 (HSYV…GGAY), and 418–433 (GGYG…MSGY). The 2 X 19 AA perfect repeats stretch occupies residues 354 to 392 (HRYVELFLNSTAGTSGGAYDHSYVELFLNSTAGASGGAY).

In terms of assembly, component of a ribonucleoprotein complex containing mRNAs and RNA-binding proteins including DDX5, HNRNPH2 and SRSF1 as well as splicing regulator ARVCF. Interacts with TXNL4/DIM1. Expressed ubiquitously.

The protein resides in the nucleus. Its subcellular location is the nucleoplasm. Functionally, this protein is a component of the heterogeneous nuclear ribonucleoprotein (hnRNP) complexes which provide the substrate for the processing events that pre-mRNAs undergo before becoming functional, translatable mRNAs in the cytoplasm. Binds poly(RG). This Homo sapiens (Human) protein is Heterogeneous nuclear ribonucleoprotein H2 (HNRNPH2).